A 303-amino-acid chain; its full sequence is Dihydroorotate dehydrogenase B (NAD(+)), catalytic subunit (303 aa).

Residues serine 23 and 47–48 (KS) each bind FMN. Residues lysine 47, 71 to 75 (NAMGL), and asparagine 125 each bind substrate. Asparagine 125 provides a ligand contact to FMN. Residue cysteine 128 is the Nucleophile of the active site. FMN is bound by residues lysine 163 and isoleucine 189. 190-191 (NT) is a substrate binding site. Residues glycine 215, 241-242 (GG), and 263-264 (GT) each bind FMN.

This sequence belongs to the dihydroorotate dehydrogenase family. Type 1 subfamily. As to quaternary structure, heterotetramer of 2 PyrK and 2 PyrD type B subunits. It depends on FMN as a cofactor.

Its subcellular location is the cytoplasm. It carries out the reaction (S)-dihydroorotate + NAD(+) = orotate + NADH + H(+). It participates in pyrimidine metabolism; UMP biosynthesis via de novo pathway; orotate from (S)-dihydroorotate (NAD(+) route): step 1/1. Its function is as follows. Catalyzes the conversion of dihydroorotate to orotate with NAD(+) as electron acceptor. In Pyrococcus horikoshii (strain ATCC 700860 / DSM 12428 / JCM 9974 / NBRC 100139 / OT-3), this protein is Dihydroorotate dehydrogenase B (NAD(+)), catalytic subunit (pyrD).